A 198-amino-acid polypeptide reads, in one-letter code: Ribonuclease HII (198 aa).

One can recognise an RNase H type-2 domain in the interval glutamine 10 to serine 198. A divalent metal cation-binding residues include aspartate 16, glutamate 17, and aspartate 108.

The protein belongs to the RNase HII family. Mn(2+) is required as a cofactor. The cofactor is Mg(2+).

The protein localises to the cytoplasm. It catalyses the reaction Endonucleolytic cleavage to 5'-phosphomonoester.. Endonuclease that specifically degrades the RNA of RNA-DNA hybrids. The sequence is that of Ribonuclease HII from Escherichia coli O45:K1 (strain S88 / ExPEC).